The chain runs to 295 residues: Ribosomal RNA small subunit methyltransferase A (295 aa).

S-adenosyl-L-methionine-binding residues include Asn-29, Leu-31, Gly-56, Glu-77, Asp-102, and Asn-128.

This sequence belongs to the class I-like SAM-binding methyltransferase superfamily. rRNA adenine N(6)-methyltransferase family. RsmA subfamily.

Its subcellular location is the cytoplasm. It catalyses the reaction adenosine(1518)/adenosine(1519) in 16S rRNA + 4 S-adenosyl-L-methionine = N(6)-dimethyladenosine(1518)/N(6)-dimethyladenosine(1519) in 16S rRNA + 4 S-adenosyl-L-homocysteine + 4 H(+). Its function is as follows. Specifically dimethylates two adjacent adenosines (A1518 and A1519) in the loop of a conserved hairpin near the 3'-end of 16S rRNA in the 30S particle. May play a critical role in biogenesis of 30S subunits. This is Ribosomal RNA small subunit methyltransferase A from Listeria welshimeri serovar 6b (strain ATCC 35897 / DSM 20650 / CCUG 15529 / CIP 8149 / NCTC 11857 / SLCC 5334 / V8).